The chain runs to 105 residues: Large ribosomal subunit protein uL24 (105 aa).

It belongs to the universal ribosomal protein uL24 family. Part of the 50S ribosomal subunit.

Its function is as follows. One of two assembly initiator proteins, it binds directly to the 5'-end of the 23S rRNA, where it nucleates assembly of the 50S subunit. In terms of biological role, one of the proteins that surrounds the polypeptide exit tunnel on the outside of the subunit. This is Large ribosomal subunit protein uL24 from Methylocella silvestris (strain DSM 15510 / CIP 108128 / LMG 27833 / NCIMB 13906 / BL2).